The chain runs to 397 residues: 3-ketoacyl-CoA thiolase, mitochondrial (397 aa).

The transit peptide at 1–16 (MALLRGVFIVAAKRTP) directs the protein to the mitochondrion; not cleaved. Lysine 25 bears the N6-acetyllysine; alternate mark. Residue lysine 25 is modified to N6-succinyllysine; alternate. Residue serine 28 is modified to Phosphoserine. Position 45 is an N6-succinyllysine (lysine 45). Residue cysteine 92 is the Acyl-thioester intermediate of the active site. The residue at position 119 (threonine 119) is a Phosphothreonine. Serine 121 is modified (phosphoserine). At tyrosine 127 the chain carries Phosphotyrosine. Threonine 136 is modified (phosphothreonine). Residues lysine 137, lysine 143, lysine 158, lysine 171, lysine 191, and lysine 209 each carry the N6-acetyllysine; alternate modification. Residues lysine 137, lysine 143, lysine 158, lysine 171, lysine 191, and lysine 209 each carry the N6-succinyllysine; alternate modification. Lysine 211, lysine 212, and lysine 214 each carry N6-succinyllysine. CoA-binding residues include arginine 224 and threonine 227. Residue lysine 234 is modified to N6-acetyllysine; alternate. Lysine 234 is subject to N6-succinyllysine; alternate. The residue at position 240 (lysine 240) is an N6-succinyllysine. Lysine 241 carries the N6-acetyllysine modification. Serine 251 is a binding site for CoA. An N6-acetyllysine mark is found at lysine 269 and lysine 270. N6-acetyllysine; alternate is present on lysine 305. N6-succinyllysine; alternate is present on lysine 305. Serine 310 carries the phosphoserine modification. Lysine 312 carries the N6-acetyllysine; alternate modification. Lysine 312 is modified (N6-succinyllysine; alternate). Residue lysine 340 is modified to N6-acetyllysine. Serine 344 carries the phosphoserine modification. Lysine 375 bears the N6-acetyllysine mark. The Proton donor/acceptor role is filled by cysteine 382.

It belongs to the thiolase-like superfamily. Thiolase family. As to quaternary structure, homotetramer. Interacts with BNIP3.

The protein resides in the mitochondrion. It catalyses the reaction an acyl-CoA + acetyl-CoA = a 3-oxoacyl-CoA + CoA. The enzyme catalyses 2 acetyl-CoA = acetoacetyl-CoA + CoA. The catalysed reaction is acetyl-CoA + H2O = acetate + CoA + H(+). It carries out the reaction propanoyl-CoA + H2O = propanoate + CoA + H(+). It catalyses the reaction butanoyl-CoA + H2O = butanoate + CoA + H(+). The enzyme catalyses hexanoyl-CoA + H2O = hexanoate + CoA + H(+). The catalysed reaction is octanoyl-CoA + H2O = octanoate + CoA + H(+). It carries out the reaction decanoyl-CoA + H2O = decanoate + CoA + H(+). It catalyses the reaction dodecanoyl-CoA + H2O = dodecanoate + CoA + H(+). The enzyme catalyses tetradecanoyl-CoA + H2O = tetradecanoate + CoA + H(+). The catalysed reaction is hexadecanoyl-CoA + H2O = hexadecanoate + CoA + H(+). It functions in the pathway lipid metabolism; fatty acid beta-oxidation. Its function is as follows. In the production of energy from fats, this is one of the enzymes that catalyzes the last step of the mitochondrial beta-oxidation pathway, an aerobic process breaking down fatty acids into acetyl-CoA. Using free coenzyme A/CoA, catalyzes the thiolytic cleavage of medium- to long-chain unbranched 3-oxoacyl-CoAs into acetyl-CoA and a fatty acyl-CoA shortened by two carbon atoms. Also catalyzes the condensation of two acetyl-CoA molecules into acetoacetyl-CoA and could be involved in the production of ketone bodies. Also displays hydrolase activity on various fatty acyl-CoAs. Thereby, could be responsible for the production of acetate in a side reaction to beta-oxidation. Abolishes BNIP3-mediated apoptosis and mitochondrial damage. In Mus musculus (Mouse), this protein is 3-ketoacyl-CoA thiolase, mitochondrial (Acaa2).